A 340-amino-acid chain; its full sequence is Ephrin-B3 (340 aa).

The N-terminal stretch at Met1–Gly27 is a signal peptide. Positions Leu28–Val167 constitute an Ephrin RBD domain. Residues Leu28–Pro226 are Extracellular-facing. 2 cysteine pairs are disulfide-bonded: Cys62-Cys104 and Cys92-Cys156. The tract at residues Gly168 to Met225 is disordered. A compositionally biased stretch (basic and acidic residues) spans Pro185–Lys200. Asn210 carries an N-linked (GlcNAc...) asparagine glycan. The helical transmembrane segment at Ala227–Gly247 threads the bilayer. Topologically, residues Ala248–Val340 are cytoplasmic. Positions Arg254–Arg298 are disordered. Over residues Gly267–Gly284 the composition is skewed to gly residues. Arg271 carries the post-translational modification Omega-N-methylarginine. The residue at position 274 (Ser274) is a Phosphoserine. The PDZ-binding signature appears at Tyr338 to Val340.

It belongs to the ephrin family. As to quaternary structure, interacts with GRIP1 and GRIP2. (Microbial infection) Interacts with nipah virus and hendra virus glycoprotein. Highly expressed in brain; expressed in embryonic floor plate, roof plate and hindbrain segments.

Its subcellular location is the membrane. In terms of biological role, cell surface transmembrane ligand for Eph receptors, a family of receptor tyrosine kinases which are crucial for migration, repulsion and adhesion during neuronal, vascular and epithelial development. Binds promiscuously Eph receptors residing on adjacent cells, leading to contact-dependent bidirectional signaling into neighboring cells. The signaling pathway downstream of the receptor is referred to as forward signaling while the signaling pathway downstream of the ephrin ligand is referred to as reverse signaling. May play a pivotal role in forebrain function. Binds to, and induce the collapse of, commissural axons/growth cones in vitro. May play a role in constraining the orientation of longitudinally projecting axons. Its function is as follows. (Microbial infection) Acts as a receptor for nipah virus and hendra virus. This chain is Ephrin-B3 (EFNB3), found in Homo sapiens (Human).